A 2210-amino-acid polypeptide reads, in one-letter code: Filamin-A (2210 aa).

Calponin-homology (CH) domains lie at 15-120 (KIQQ…LHYS) and 139-242 (HTPK…NSKL). 20 Filamin repeats span residues 249-347 (RPKT…PVKV), 349-447 (GHAG…PVKV), 448-544 (APLS…EVKV), 545-635 (GPKK…IAQI), 638-734 (RTDF…RVYV), 735-831 (GVPV…VVVE), 832-929 (QTVD…VVNV), 930-1022 (KSGC…RVLV), 1023-1121 (EETV…VMTV), 1122-1217 (FPKS…KLEA), 1218-1312 (FPTG…SIKA), 1322-1423 (SEYI…KFHV), 1424-1515 (DSIT…FAKI), 1516-1603 (TGEG…KVTV), 1606-1698 (REVG…TVKV), 1699-1796 (AGEG…QFTV), 1799-1891 (LRDS…KVYV), 1893-1986 (PDAG…RIKV), 1988-2079 (KDVA…KVNA), and 2116-2210 (TFKS…QIDV).

This sequence belongs to the filamin family. As to quaternary structure, interacts with Ten-m. As to expression, germline-specific in females (at protein level). Expressed in ovary.

It is found in the cytoplasm. The protein resides in the cytoskeleton. Its subcellular location is the cell membrane. Functionally, involved in the germline ring canal formation. May tether actin microfilament within the ovarian ring canal to the cell membrane. Contributes to actin microfilaments organization. This is Filamin-A (cher) from Drosophila melanogaster (Fruit fly).